The primary structure comprises 231 residues: Putative cobalt transport protein CbiM 1 (231 aa).

Transmembrane regions (helical) follow at residues Pro9–Phe29, Val41–Pro61, Gly74–Leu94, Thr107–Tyr127, Val135–Val155, and Val181–Phe201.

This sequence belongs to the CbiM family. Forms an energy-coupling factor (ECF) transporter complex composed of an ATP-binding protein (A component, CbiO), a transmembrane protein (T component, CbiQ) and 2 possible substrate-capture proteins (S components, CbiM and CbiN) of unknown stoichimetry.

It is found in the cell membrane. It functions in the pathway cofactor biosynthesis; adenosylcobalamin biosynthesis. Part of the energy-coupling factor (ECF) transporter complex CbiMNOQ involved in cobalt import. This Methanosarcina barkeri (strain Fusaro / DSM 804) protein is Putative cobalt transport protein CbiM 1.